The following is a 174-amino-acid chain: Endoribonuclease YbeY (174 aa).

Zn(2+) contacts are provided by H133, H137, and H143.

Belongs to the endoribonuclease YbeY family. Requires Zn(2+) as cofactor.

It is found in the cytoplasm. Its function is as follows. Single strand-specific metallo-endoribonuclease involved in late-stage 70S ribosome quality control and in maturation of the 3' terminus of the 16S rRNA. This chain is Endoribonuclease YbeY, found in Paracoccus denitrificans (strain Pd 1222).